The chain runs to 309 residues: Heme A synthase (309 aa).

Over 1–6 the chain is Cytoplasmic; sequence MTKKLK. A helical transmembrane segment spans residues 7–27; the sequence is ILSVISTICMIPLLLGGALVT. Residues 28–62 are Extracellular-facing; sequence KTGSADGCGNSWPLCEGQFLPTKISFEMFIELSHR. C35 and C42 are disulfide-bonded. E58 is an active-site residue. Residue H61 coordinates heme o. Residues 63–83 traverse the membrane as a helical segment; that stretch reads GVTGVVGILIVYLTYLVWKEL. Over 84 to 88 the chain is Cytoplasmic; it reads RHNKE. Residues 89–109 traverse the membrane as a helical segment; sequence VVFLAFSALSLMILQALIGAA. The Extracellular segment spans residues 110–123; it reads AVVWGQSDFALATH. Residue H123 participates in heme o binding. Residues 124–144 form a helical membrane-spanning segment; that stretch reads FGISLVCFAAVFLLMLQLFEI. Over 145–159 the chain is Cytoplasmic; sequence DKKLHTEDIHINKTH. Residues 160–180 traverse the membrane as a helical segment; the sequence is RIEIYAISFYTMCVVYSGALV. Over 181–211 the chain is Extracellular; that stretch reads RHTDSNLACRDWPLCVNNSSFGISDYNFYQW. C189 and C195 are oxidised to a cystine. Residues 212–232 traverse the membrane as a helical segment; the sequence is VQMGHRLAAGILFIWTVILTI. H216 provides a ligand contact to heme b. Topologically, residues 233 to 247 are cytoplasmic; that stretch reads RMVKHYKNSKVFYWS. Residues 248-268 form a helical membrane-spanning segment; it reads WLITLGLITLQVLFGALIIFT. Residues 269 to 271 are Extracellular-facing; that stretch reads SLN. The chain crosses the membrane as a helical span at residues 272-292; sequence LAIALFHALFITCYFGMLSFF. H278 lines the heme b pocket. Residues 293–309 lie on the Cytoplasmic side of the membrane; the sequence is MHLSFRAKRREKYSNQS.

The protein belongs to the COX15/CtaA family. Type 1 subfamily. As to quaternary structure, interacts with CtaB. It depends on heme b as a cofactor.

It localises to the cell membrane. It carries out the reaction Fe(II)-heme o + 2 A + H2O = Fe(II)-heme a + 2 AH2. The protein operates within porphyrin-containing compound metabolism; heme A biosynthesis; heme A from heme O: step 1/1. Its function is as follows. Catalyzes the conversion of heme O to heme A by two successive hydroxylations of the methyl group at C8. The first hydroxylation forms heme I, the second hydroxylation results in an unstable dihydroxymethyl group, which spontaneously dehydrates, resulting in the formyl group of heme A. The sequence is that of Heme A synthase from Oceanobacillus iheyensis (strain DSM 14371 / CIP 107618 / JCM 11309 / KCTC 3954 / HTE831).